The following is a 38-amino-acid chain: Large ribosomal subunit protein bL36 (38 aa).

Belongs to the bacterial ribosomal protein bL36 family.

This Acholeplasma laidlawii (strain PG-8A) protein is Large ribosomal subunit protein bL36.